A 254-amino-acid chain; its full sequence is Triosephosphate isomerase (254 aa).

9–11 is a substrate binding site; sequence NWK. The active-site Electrophile is the His96. Glu169 acts as the Proton acceptor in catalysis. Residues Gly175, Ser215, and 236–237 contribute to the substrate site; that span reads GG.

Belongs to the triosephosphate isomerase family. Homodimer.

It is found in the cytoplasm. It carries out the reaction D-glyceraldehyde 3-phosphate = dihydroxyacetone phosphate. The protein operates within carbohydrate biosynthesis; gluconeogenesis. It functions in the pathway carbohydrate degradation; glycolysis; D-glyceraldehyde 3-phosphate from glycerone phosphate: step 1/1. Involved in the gluconeogenesis. Catalyzes stereospecifically the conversion of dihydroxyacetone phosphate (DHAP) to D-glyceraldehyde-3-phosphate (G3P). This Borrelia duttonii (strain Ly) protein is Triosephosphate isomerase.